The chain runs to 161 residues: Zinc finger A20 and AN1 domain-containing stress-associated protein 9 (161 aa).

An A20-type zinc finger spans residues proline 17–threonine 51. Positions 23, 27, 39, and 42 each coordinate Zn(2+). Positions phenylalanine 62 to serine 99 are disordered. The span at alanine 75–alanine 90 shows a compositional bias: basic and acidic residues. The segment at lysine 96–glycine 142 adopts an AN1-type zinc-finger fold. Positions 102, 105, 116, 118, 123, 126, 132, and 134 each coordinate Zn(2+).

Functionally, may be involved in environmental stress response. The sequence is that of Zinc finger A20 and AN1 domain-containing stress-associated protein 9 (SAP9) from Oryza sativa subsp. japonica (Rice).